The chain runs to 69 residues: Large ribosomal subunit protein uL29 (69 aa).

This sequence belongs to the universal ribosomal protein uL29 family.

The protein is Large ribosomal subunit protein uL29 of Treponema denticola (strain ATCC 35405 / DSM 14222 / CIP 103919 / JCM 8153 / KCTC 15104).